Consider the following 154-residue polypeptide: Myoglobin (154 aa).

Residues 2–148 (GLSDGEWQLV…FRNDIAAKYK (147 aa)) enclose the Globin domain. Ser-4 bears the Phosphoserine mark. His-65 contacts nitrite. An O2-binding site is contributed by His-65. At Thr-68 the chain carries Phosphothreonine. His-94 serves as a coordination point for heme b.

The protein belongs to the globin family. Monomeric.

The protein resides in the cytoplasm. The protein localises to the sarcoplasm. The catalysed reaction is Fe(III)-heme b-[protein] + nitric oxide + H2O = Fe(II)-heme b-[protein] + nitrite + 2 H(+). It catalyses the reaction H2O2 + AH2 = A + 2 H2O. Monomeric heme protein which primary function is to store oxygen and facilitate its diffusion within muscle tissues. Reversibly binds oxygen through a pentacoordinated heme iron and enables its timely and efficient release as needed during periods of heightened demand. Depending on the oxidative conditions of tissues and cells, and in addition to its ability to bind oxygen, it also has a nitrite reductase activity whereby it regulates the production of bioactive nitric oxide. Under stress conditions, like hypoxia and anoxia, it also protects cells against reactive oxygen species thanks to its pseudoperoxidase activity. The polypeptide is Myoglobin (MB) (Lutra lutra (European river otter)).